A 109-amino-acid chain; its full sequence is MTETEFLALVEQVLDSVERMADDWAAEQDLDIEANRSGNVLTLVFEDGTHVVINSQAAMQELWLASRSGGFHYRFDGQRWNDTRGGPGFVDALSQVCSAAAGVPLTVRL.

It belongs to the frataxin family.

Involved in iron-sulfur (Fe-S) cluster assembly. May act as a regulator of Fe-S biogenesis. This is Iron-sulfur cluster assembly protein CyaY from Bordetella avium (strain 197N).